We begin with the raw amino-acid sequence, 345 residues long: N-acetyl-gamma-glutamyl-phosphate reductase (345 aa).

The active site involves Cys-149.

This sequence belongs to the NAGSA dehydrogenase family. Type 1 subfamily.

The protein localises to the cytoplasm. It carries out the reaction N-acetyl-L-glutamate 5-semialdehyde + phosphate + NADP(+) = N-acetyl-L-glutamyl 5-phosphate + NADPH + H(+). It participates in amino-acid biosynthesis; L-arginine biosynthesis; N(2)-acetyl-L-ornithine from L-glutamate: step 3/4. In terms of biological role, catalyzes the NADPH-dependent reduction of N-acetyl-5-glutamyl phosphate to yield N-acetyl-L-glutamate 5-semialdehyde. The protein is N-acetyl-gamma-glutamyl-phosphate reductase of Bacillus cereus (strain AH187).